The following is a 239-amino-acid chain: 1-(5-phosphoribosyl)-5-[(5-phosphoribosylamino)methylideneamino] imidazole-4-carboxamide isomerase (239 aa).

The active-site Proton acceptor is the Asp8. Asp129 serves as the catalytic Proton donor.

The protein belongs to the HisA/HisF family.

The protein resides in the cytoplasm. The catalysed reaction is 1-(5-phospho-beta-D-ribosyl)-5-[(5-phospho-beta-D-ribosylamino)methylideneamino]imidazole-4-carboxamide = 5-[(5-phospho-1-deoxy-D-ribulos-1-ylimino)methylamino]-1-(5-phospho-beta-D-ribosyl)imidazole-4-carboxamide. It participates in amino-acid biosynthesis; L-histidine biosynthesis; L-histidine from 5-phospho-alpha-D-ribose 1-diphosphate: step 4/9. This is 1-(5-phosphoribosyl)-5-[(5-phosphoribosylamino)methylideneamino] imidazole-4-carboxamide isomerase from Bacillus cereus (strain AH820).